The sequence spans 366 residues: Aminomethyltransferase (366 aa).

The protein belongs to the GcvT family. The glycine cleavage system is composed of four proteins: P, T, L and H.

The enzyme catalyses N(6)-[(R)-S(8)-aminomethyldihydrolipoyl]-L-lysyl-[protein] + (6S)-5,6,7,8-tetrahydrofolate = N(6)-[(R)-dihydrolipoyl]-L-lysyl-[protein] + (6R)-5,10-methylene-5,6,7,8-tetrahydrofolate + NH4(+). The glycine cleavage system catalyzes the degradation of glycine. In Bacillus anthracis (strain A0248), this protein is Aminomethyltransferase.